A 1067-amino-acid polypeptide reads, in one-letter code: Ubiquitin carboxyl-terminal hydrolase 26 (1067 aa).

A compositionally biased stretch (basic residues) spans 1-12 (MSRPNTRNKNKR). A disordered region spans residues 1 to 22 (MSRPNTRNKNKRQRPDAVDSSS). One can recognise a USP domain in the interval 106-442 (AGLTNLGATC…DAYMLMYSLR (337 aa)). The active-site Nucleophile is Cys115. His359 (proton acceptor) is an active-site residue. A disordered region spans residues 385–418 (KRPCNEASSSTPQSESNGTASSGNITDGIQSGSS). Positions 390 to 418 (EASSSTPQSESNGTASSGNITDGIQSGSS) are enriched in polar residues. DUSP domains follow at residues 503–595 (NALT…GDYC), 610–711 (DSYR…DCTC), and 738–861 (TLKV…SAFI). Residues 948-1031 (FEVDRRTSKR…LWVRDTEMHE (84 aa)) form the Ubiquitin-like domain.

This sequence belongs to the peptidase C19 family. Expressed in seedlings, roots, stems, leaves and inflorescences.

It is found in the nucleus. The catalysed reaction is Thiol-dependent hydrolysis of ester, thioester, amide, peptide and isopeptide bonds formed by the C-terminal Gly of ubiquitin (a 76-residue protein attached to proteins as an intracellular targeting signal).. Its function is as follows. Recognizes and hydrolyzes the peptide bond at the C-terminal Gly of ubiquitin. Involved in the processing of poly-ubiquitin precursors as well as that of ubiquitinated proteins. Deubiquitinates H2BK143ub1 of histone H2B. This Arabidopsis thaliana (Mouse-ear cress) protein is Ubiquitin carboxyl-terminal hydrolase 26 (UBP26).